We begin with the raw amino-acid sequence, 270 residues long: MMKRNFDQVKRIVIKIGTSSLVQENGKINLEKIDQLAFVMSSLKNKGKDLILVSSGAMGFGLDILKMDKRPSDLAKQQAVSSVGQVAMMSLYSQIFSHYQTNVSQILLTRDVVIFPESLANVTNAFESLMAMGIVPIVNENDAVSVDEMDHATKFGDNDRLSAVVAEITKADLLIMLSDIDGLYDKNPTIYEDAQLRSIVTEITDEIIKSAGGAGSKFGTGGMLSKIQSAQMVFANNGQMVLMNGKNPRDILRVLEGKEIGTWFVQEKGN.

Lys15 provides a ligand contact to ATP. Substrate is bound by residues Ser55, Asp142, and Asn158. ATP is bound by residues 178–179 and 220–226; these read SD and TGGMLSK.

Belongs to the glutamate 5-kinase family.

It is found in the cytoplasm. The catalysed reaction is L-glutamate + ATP = L-glutamyl 5-phosphate + ADP. It functions in the pathway amino-acid biosynthesis; L-proline biosynthesis; L-glutamate 5-semialdehyde from L-glutamate: step 1/2. Catalyzes the transfer of a phosphate group to glutamate to form L-glutamate 5-phosphate. The protein is Glutamate 5-kinase of Streptococcus uberis (strain ATCC BAA-854 / 0140J).